A 69-amino-acid polypeptide reads, in one-letter code: UPF0150 protein Ta0767 (69 aa).

It belongs to the UPF0150 family.

This chain is UPF0150 protein Ta0767, found in Thermoplasma acidophilum (strain ATCC 25905 / DSM 1728 / JCM 9062 / NBRC 15155 / AMRC-C165).